We begin with the raw amino-acid sequence, 352 residues long: C-X-C chemokine receptor type 4 (352 aa).

Residues 1 to 21 are important for chemokine binding and signaling; that stretch reads MEGISIYTSDNYTEEMGSGDY. Residues 1 to 38 are Extracellular-facing; that stretch reads MEGISIYTSDNYTEEMGSGDYDSIKEPCFREENAHFNR. The residue at position 7 (Y7) is a Sulfotyrosine. N11 carries N-linked (GlcNAc...) asparagine glycosylation. Y12 bears the Sulfotyrosine mark. O-linked (Xyl...) (chondroitin sulfate) serine glycosylation is present at S18. Y21 is modified (sulfotyrosine). Disulfide bonds link C28/C274 and C109/C186. Residues 39–63 form a helical membrane-spanning segment; it reads IFLPTIYSIIFLTGIVGNGLVILVM. Residues 64 to 77 are Cytoplasmic-facing; sequence GYQKKLRSMTDKYR. The chain crosses the membrane as a helical span at residues 78–99; that stretch reads LHLSVADLLFVITLPFWAVDAV. Residues 94-97 form a chemokine binding region; sequence WAVD. Topologically, residues 100–110 are extracellular; that stretch reads ANWYFGKFLCK. The helical transmembrane segment at 111–130 threads the bilayer; it reads AVHVIYTVNLYSSVLILAFI. Positions 113–117 are chemokine binding; sequence HVIYT. The Cytoplasmic segment spans residues 131 to 154; the sequence is SLDRYLAIVHATNSQRPRKLLAEK. Residues 133 to 135 carry the Important for signaling motif; that stretch reads DRY. Residues 135–147 are involved in dimerization; when bound to chemokine; it reads YLAIVHATNSQRP. A helical membrane pass occupies residues 155-174; that stretch reads VVYVGVWIPALLLTIPDFIF. The Extracellular portion of the chain corresponds to 175–195; it reads ANVSEADDRYICDRFYPNDLW. The segment at 186–190 is chemokine binding, important for signaling; the sequence is CDRFY. The involved in dimerization stretch occupies residues 191-210; sequence PNDLWVVVFQFQHIMVGLIL. Residues 196 to 216 traverse the membrane as a helical segment; it reads VVVFQFQHIMVGLILPGIVIL. The Cytoplasmic segment spans residues 217–241; that stretch reads SCYCIIISKLSHSKGHQKRKALKTT. The helical transmembrane segment at 242–261 threads the bilayer; the sequence is VILILAFFACWLPYYIGISI. Topologically, residues 262–282 are extracellular; the sequence is DSFILLEIIRQGCEFENTVHK. Positions 266–268 are involved in dimerization; sequence LLE. Residues 283-302 traverse the membrane as a helical segment; that stretch reads WISITEALAFFHCCLNPILY. The Cytoplasmic portion of the chain corresponds to 303 to 352; that stretch reads AFLGAKFKTSAQHALTSVSRGSSLKILSKGKRGGHSSVSTESESSSFHSS. S319 and S321 each carry phosphoserine. Phosphoserine; by PKC and GRK6 is present on residues S324 and S325. Positions 329–352 are disordered; it reads LSKGKRGGHSSVSTESESSSFHSS. S330 is modified (phosphoserine; by GRK6). A Glycyl lysine isopeptide (Lys-Gly) (interchain with G-Cter in ubiquitin) cross-link involves residue K331. The segment covering 337–352 has biased composition (low complexity); that stretch reads HSSVSTESESSSFHSS. S339 carries the post-translational modification Phosphoserine; by GRK6. Residues S348 and S351 each carry the phosphoserine modification.

The protein belongs to the G-protein coupled receptor 1 family. Monomer. Can form homodimers. Interacts with CD164. Interacts with ARRB2; the interaction is dependent on the C-terminal phosphorylation of CXCR4 and allows activation of MAPK1 and MAPK3. Interacts with ARR3; the interaction is dependent on the C-terminal phosphorylation of CXCR4 and modulates calcium mobilization. Interacts with RNF113A; the interaction, enhanced by CXCL12, promotes CXCR4 ubiquitination and subsequent degradation. Interacts (via the cytoplasmic C-terminal) with ITCH (via the WW domains I and II); the interaction, enhanced by CXCL12, promotes CXCR4 ubiquitination and leads to its degradation. Interacts with extracellular ubiquitin. Interacts with DBN1; this interaction is enhanced by antigenic stimulation. Following LPS binding, may form a complex with GDF5, HSP90AA1 and HSPA8. Post-translationally, phosphorylated on agonist stimulation. Rapidly phosphorylated on serine and threonine residues in the C-terminal. Phosphorylation at Ser-324 and Ser-325 leads to recruitment of ITCH, ubiquitination and protein degradation. In terms of processing, ubiquitinated after ligand binding, leading to its degradation. Ubiquitinated by ITCH at the cell membrane on agonist stimulation. The ubiquitin-dependent mechanism, endosomal sorting complex required for transport (ESCRT), then targets CXCR4 for lysosomal degradation. This process is dependent also on prior Ser-/Thr-phosphorylation in the C-terminal of CXCR4. Also binding of ARRB1 to STAM negatively regulates CXCR4 sorting to lysosomes though modulating ubiquitination of SFR5S. Sulfation is required for efficient binding of CXCL12/SDF-1alpha and promotes its dimerization. Post-translationally, O- and N-glycosylated. N-glycosylation can mask coreceptor function. The O-glycosylation chondroitin sulfate attachment does not affect interaction with CXCL12/SDF-1alpha nor its coreceptor activity.

Its subcellular location is the cell membrane. It localises to the cell junction. It is found in the early endosome. The protein resides in the late endosome. The protein localises to the lysosome. Receptor for the C-X-C chemokine CXCL12/SDF-1 that transduces a signal by increasing intracellular calcium ion levels and enhancing MAPK1/MAPK3 activation. Involved in the AKT signaling cascade. Plays a role in regulation of cell migration, e.g. during wound healing. Acts as a receptor for extracellular ubiquitin; leading to enhanced intracellular calcium ions and reduced cellular cAMP levels. Binds bacterial lipopolysaccharide (LPS) et mediates LPS-induced inflammatory response, including TNF secretion by monocytes. Involved in hematopoiesis and in cardiac ventricular septum formation. Also plays an essential role in vascularization of the gastrointestinal tract, probably by regulating vascular branching and/or remodeling processes in endothelial cells. Involved in cerebellar development. In the CNS, could mediate hippocampal-neuron survival. In Saimiri sciureus (Common squirrel monkey), this protein is C-X-C chemokine receptor type 4 (CXCR4).